The chain runs to 258 residues: Thiamine thiazole synthase (258 aa).

NAD(+)-binding positions include Ala-36, 55-56 (EK), Gly-63, Val-127, and 154-156 (HVD). 2 residues coordinate Fe cation: Asp-156 and His-171. Met-224 is a binding site for NAD(+). Arg-234 is a binding site for glycine.

It belongs to the THI4 family. Homooctamer; tetramer of dimers. The cofactor is Fe(2+).

The enzyme catalyses hydrogen sulfide + glycine + NAD(+) = ADP-5-ethyl-4-methylthiazole-2-carboxylate + nicotinamide + 3 H2O + H(+). Its pathway is cofactor biosynthesis; thiamine diphosphate biosynthesis. Functionally, involved in the biosynthesis of the thiazole moiety of thiamine. Catalyzes the conversion of NAD and glycine to adenosine diphosphate 5-(2-hydroxyethyl)-4-methylthiazole-2-carboxylate (ADT), an adenylated thiazole intermediate, using free sulfide as a source of sulfur. This chain is Thiamine thiazole synthase, found in Methanococcoides burtonii (strain DSM 6242 / NBRC 107633 / OCM 468 / ACE-M).